The primary structure comprises 472 residues: Kynureninase 2 (472 aa).

Pyridoxal 5'-phosphate-binding positions include L133, T134, F162–D165, D247, H250, and Y272. K273 bears the N6-(pyridoxal phosphate)lysine mark. W314 and N342 together coordinate pyridoxal 5'-phosphate.

This sequence belongs to the kynureninase family. As to quaternary structure, homodimer. It depends on pyridoxal 5'-phosphate as a cofactor.

The protein localises to the cytoplasm. It carries out the reaction L-kynurenine + H2O = anthranilate + L-alanine + H(+). The enzyme catalyses 3-hydroxy-L-kynurenine + H2O = 3-hydroxyanthranilate + L-alanine + H(+). It participates in amino-acid degradation; L-kynurenine degradation; L-alanine and anthranilate from L-kynurenine: step 1/1. Its pathway is cofactor biosynthesis; NAD(+) biosynthesis; quinolinate from L-kynurenine: step 2/3. Its function is as follows. Catalyzes the cleavage of L-kynurenine (L-Kyn) and L-3-hydroxykynurenine (L-3OHKyn) into anthranilic acid (AA) and 3-hydroxyanthranilic acid (3-OHAA), respectively. This Neurospora crassa (strain ATCC 24698 / 74-OR23-1A / CBS 708.71 / DSM 1257 / FGSC 987) protein is Kynureninase 2 (kyn-2).